The primary structure comprises 481 residues: Glutamyl-tRNA(Gln) amidotransferase subunit A (481 aa).

Residues lysine 76 and serine 151 each act as charge relay system in the active site. The active-site Acyl-ester intermediate is the serine 175.

This sequence belongs to the amidase family. GatA subfamily. Heterotrimer of A, B and C subunits.

The enzyme catalyses L-glutamyl-tRNA(Gln) + L-glutamine + ATP + H2O = L-glutaminyl-tRNA(Gln) + L-glutamate + ADP + phosphate + H(+). Allows the formation of correctly charged Gln-tRNA(Gln) through the transamidation of misacylated Glu-tRNA(Gln) in organisms which lack glutaminyl-tRNA synthetase. The reaction takes place in the presence of glutamine and ATP through an activated gamma-phospho-Glu-tRNA(Gln). The protein is Glutamyl-tRNA(Gln) amidotransferase subunit A of Neisseria meningitidis serogroup C / serotype 2a (strain ATCC 700532 / DSM 15464 / FAM18).